The following is a 428-amino-acid chain: Sialidase-3 (428 aa).

Residues 24 to 27 (YRIP) carry the FRIP motif motif. Residues arginine 25 and arginine 45 each contribute to the substrate site. Aspartate 50 serves as the catalytic Proton acceptor. Residues 129–140 (ICSQDAGYSWSD) form a BNR 1 repeat. Residues tyrosine 179 and tyrosine 181 each coordinate substrate. A BNR 2 repeat occupies 203 to 214 (IYSDDLGATWHH). Substrate is bound by residues glutamate 225 and arginine 245. The BNR 3 repeat unit spans residues 254–265 (ALSIDHGECFQK). At serine 314 the chain carries Phosphoserine. Residue arginine 341 coordinates substrate. The active-site Nucleophile is tyrosine 371. Residue glutamate 388 is part of the active site.

Belongs to the glycosyl hydrolase 33 family. As to quaternary structure, interacts with CAV1; this interaction enhances NEU3 sialidase activity within caveola. Interacts with EGFR; this interaction mediates desialylation of EGFR and enhances downstream signaling. Post-translationally, palmitoylated; may regulate intracellular trafficking and anchorage to plasma membrane and endomembranes. Expressed in brain.

The protein localises to the cell membrane. Its subcellular location is the membrane. The protein resides in the caveola. It is found in the early endosome membrane. It localises to the recycling endosome membrane. The protein localises to the lysosome membrane. It catalyses the reaction Hydrolysis of alpha-(2-&gt;3)-, alpha-(2-&gt;6)-, alpha-(2-&gt;8)- glycosidic linkages of terminal sialic acid residues in oligosaccharides, glycoproteins, glycolipids, colominic acid and synthetic substrates.. The enzyme catalyses a ganglioside GD1a + H2O = a ganglioside GM1 + N-acetylneuraminate. The catalysed reaction is a ganglioside GD1a (d18:1(4E)) + H2O = a ganglioside GM1 (d18:1(4E)) + N-acetylneuraminate. It carries out the reaction a ganglioside GD1b + H2O = a ganglioside GM1 + N-acetylneuraminate. It catalyses the reaction a ganglioside GD1b (d18:1(4E)) + H2O = a ganglioside GM1 (d18:1(4E)) + N-acetylneuraminate. The enzyme catalyses a ganglioside GD3 + H2O = a ganglioside GM3 + N-acetylneuraminate. The catalysed reaction is a ganglioside GD3 (d18:1(4E)) + H2O = a ganglioside GM3 (d18:1(4E)) + N-acetylneuraminate. It carries out the reaction a ganglioside GM3 + H2O = a beta-D-galactosyl-(1-&gt;4)-beta-D-glucosyl-(1&lt;-&gt;1)-ceramide + N-acetylneuraminate. It catalyses the reaction a ganglioside GM1 + H2O = a ganglioside GA1 + N-acetylneuraminate. The enzyme catalyses a ganglioside GM1 (d18:1(4E)) + H2O = a ganglioside GA1 (d18:1(4E)) + N-acetylneuraminate. The catalysed reaction is a ganglioside GM2 (d18:1(4E)) + H2O = a ganglioside GA2 (d18:1(4E)) + N-acetylneuraminate. It carries out the reaction a ganglioside GM3 (d18:1(4E)) + H2O = a beta-D-Gal-(1-&gt;4)-beta-D-Glc-(1&lt;-&gt;1)-Cer(d18:1(4E)) + N-acetylneuraminate. It catalyses the reaction a ganglioside GT1b + H2O = a ganglioside GD1b + N-acetylneuraminate. Exo-alpha-sialidase that catalyzes the hydrolytic cleavage of the terminal sialic acid (N-acetylneuraminic acid, Neu5Ac) of a glycan moiety in the catabolism of glycolipids, glycoproteins and oligosacharides. Displays high catalytic efficiency for gangliosides including alpha-(2-&gt;3)-sialylated GD1a and GM3 and alpha-(2-&gt;8)-sialylated GD3. Plays a role in the regulation of transmembrane signaling through the modulation of ganglioside content of the lipid bilayer and by direct interaction with signaling receptors, such as EGFR. Desialylates EGFR and activates downstream signaling in proliferating cells. Contributes to clathrin-mediated endocytosis by regulating sorting of endocytosed receptors to early and recycling endosomes. This is Sialidase-3 (NEU3) from Bos taurus (Bovine).